A 1356-amino-acid polypeptide reads, in one-letter code: DNA-directed RNA polymerase subunit beta (1356 aa).

It belongs to the RNA polymerase beta chain family. The RNAP catalytic core consists of 2 alpha, 1 beta, 1 beta' and 1 omega subunit. When a sigma factor is associated with the core the holoenzyme is formed, which can initiate transcription.

The catalysed reaction is RNA(n) + a ribonucleoside 5'-triphosphate = RNA(n+1) + diphosphate. In terms of biological role, DNA-dependent RNA polymerase catalyzes the transcription of DNA into RNA using the four ribonucleoside triphosphates as substrates. This chain is DNA-directed RNA polymerase subunit beta, found in Stutzerimonas stutzeri (strain A1501) (Pseudomonas stutzeri).